A 275-amino-acid chain; its full sequence is MGLKRFKPTTPGRRFMIIPDFSEITKTKPEKSLVVPLKKSAGRNHHGRVTVRFRGGGHKRLYRIVDFRRWEKENIPAKVASIEYDPNRTARIALLIYADGEKRYILAPNGLNVGDTVMSGPEAEIKPGNALPLENIPVGTIVHSIEFLPRGGAKIARSAGVACQLMAKEGNYALLKMPSGELRKVHIKCYATVGVVGNEDHKNEVSGKAGRERWKGRKPHVRGVVMNPVDHPHGGGEGRGKGHHPQSPWGVPAKGYKTRRGKRASDKFIVRRRNG.

The segment at 223–275 (GVVMNPVDHPHGGGEGRGKGHHPQSPWGVPAKGYKTRRGKRASDKFIVRRRNG) is disordered. The segment covering 230-240 (DHPHGGGEGRG) has biased composition (basic and acidic residues).

The protein belongs to the universal ribosomal protein uL2 family. In terms of assembly, part of the 50S ribosomal subunit. Forms a bridge to the 30S subunit in the 70S ribosome.

Functionally, one of the primary rRNA binding proteins. Required for association of the 30S and 50S subunits to form the 70S ribosome, for tRNA binding and peptide bond formation. It has been suggested to have peptidyltransferase activity; this is somewhat controversial. Makes several contacts with the 16S rRNA in the 70S ribosome. This is Large ribosomal subunit protein uL2 from Fervidobacterium nodosum (strain ATCC 35602 / DSM 5306 / Rt17-B1).